A 91-amino-acid polypeptide reads, in one-letter code: DNA/RNA-binding protein Alba (91 aa).

An N6-acetyllysine modification is found at lysine 11.

The protein belongs to the histone-like Alba family. Post-translationally, acetylated. Acetylation at Lys-11 decreases DNA-binding affinity.

It localises to the cytoplasm. Its subcellular location is the chromosome. Binds double-stranded DNA tightly but without sequence specificity. Incubation with DNA in vitro gives fibrous structures 10.3 +/- 1.1 nm in thickness (naked DNA is 1.83 +/- 0.37 nm). This protein does not significantly compact DNA. The chain is DNA/RNA-binding protein Alba from Thermococcus kodakarensis (strain ATCC BAA-918 / JCM 12380 / KOD1) (Pyrococcus kodakaraensis (strain KOD1)).